The following is a 577-amino-acid chain: Serine/threonine-protein kinase AGC1-5 (577 aa).

Residues 1–12 (MDLASKKNTANV) are compositionally biased toward polar residues. The interval 1 to 151 (MDLASKKNTA…DYAYGDNLVG (151 aa)) is disordered. Residues 44–55 (PHFDPKKMDPLV) show a composition bias toward basic and acidic residues. Polar residues-rich tracts occupy residues 69–87 (TRGTNSEGDLKHNTYSSDG) and 110–120 (LTTSETYSPSA). The 325-residue stretch at 185–509 (FRLLKRLGYG…ATEIKQHPFF (325 aa)) folds into the Protein kinase domain. ATP is bound by residues 191-199 (LGYGDIGSV) and lysine 214. The Proton acceptor role is filled by aspartate 310. Residues 510–577 (EGVNWALVRS…DTAYIDFEYF (68 aa)) enclose the AGC-kinase C-terminal domain.

This sequence belongs to the protein kinase superfamily. AGC Ser/Thr protein kinase family. In terms of assembly, interacts with PDPK1/PDK1. Autophosphorylated and phosphorylated by PDPK1/PDK1. Specifically expressed in pollen grains.

It catalyses the reaction L-seryl-[protein] + ATP = O-phospho-L-seryl-[protein] + ADP + H(+). The enzyme catalyses L-threonyl-[protein] + ATP = O-phospho-L-threonyl-[protein] + ADP + H(+). Activated by PDPK1/PDK1. Its function is as follows. Functions redudantly with AGC1-7 as signaling component in the pollen tube. Required for polarized growth of pollen tubes. The sequence is that of Serine/threonine-protein kinase AGC1-5 from Arabidopsis thaliana (Mouse-ear cress).